The following is a 389-amino-acid chain: Na(+)/H(+) antiporter NhaA 1 (389 aa).

11 helical membrane passes run Val12–Val32, Phe62–Leu82, Ile97–Leu117, Gly128–Gly148, Ile157–Phe177, Ile184–Gly204, Ile220–Ile240, Phe260–Ser280, Ile282–Gly302, Leu331–Leu351, and Leu365–Phe385.

This sequence belongs to the NhaA Na(+)/H(+) (TC 2.A.33) antiporter family.

The protein resides in the cell inner membrane. The catalysed reaction is Na(+)(in) + 2 H(+)(out) = Na(+)(out) + 2 H(+)(in). Functionally, na(+)/H(+) antiporter that extrudes sodium in exchange for external protons. The chain is Na(+)/H(+) antiporter NhaA 1 from Campylobacter jejuni subsp. jejuni serotype O:6 (strain 81116 / NCTC 11828).